Consider the following 282-residue polypeptide: Anamorsin homolog (282 aa).

The segment at 5–151 is N-terminal SAM-like domain; it reads VDTNNFVLLL…EVGAKTALSL (147 aa). The linker stretch occupies residues 152–196; the sequence is SFAPKPAQPKAETSAAQIWTLSAQDIDDEDVDLLDSDTLLDEDDL. Residues Cys-208, Cys-218, Cys-221, and Cys-223 each contribute to the [2Fe-2S] cluster site. Residues 208–223 are fe-S binding site A; it reads CGPGSGKKKACKNCTC. The [4Fe-4S] cluster site is built by Cys-243, Cys-246, Cys-254, and Cys-257. Short sequence motifs (cx2C motif) lie at residues 243–246 and 254–257; these read CGSC and CSTC. Residues 243–257 are fe-S binding site B; the sequence is CGSCYLGDAFRCSTC.

The protein belongs to the anamorsin family. As to quaternary structure, monomer. [2Fe-2S] cluster serves as cofactor. It depends on [4Fe-4S] cluster as a cofactor.

The protein localises to the cytoplasm. It localises to the mitochondrion intermembrane space. Component of the cytosolic iron-sulfur (Fe-S) protein assembly (CIA) machinery. Required for the maturation of extramitochondrial Fe-S proteins. Part of an electron transfer chain functioning in an early step of cytosolic Fe-S biogenesis, facilitating the de novo assembly of a [4Fe-4S] cluster on the cytosolic Fe-S scaffold complex. Electrons are transferred from NADPH via a FAD- and FMN-containing diflavin oxidoreductase. Together with the diflavin oxidoreductase, also required for the assembly of the diferric tyrosyl radical cofactor of ribonucleotide reductase (RNR), probably by providing electrons for reduction during radical cofactor maturation in the catalytic small subunit. The sequence is that of Anamorsin homolog from Nematostella vectensis (Starlet sea anemone).